Reading from the N-terminus, the 226-residue chain is Deoxyribose-phosphate aldolase (226 aa).

The active-site Proton donor/acceptor is the Asp-96. Residue Lys-157 is the Schiff-base intermediate with acetaldehyde of the active site. Residue Lys-185 is the Proton donor/acceptor of the active site.

This sequence belongs to the DeoC/FbaB aldolase family. DeoC type 1 subfamily.

The protein resides in the cytoplasm. The catalysed reaction is 2-deoxy-D-ribose 5-phosphate = D-glyceraldehyde 3-phosphate + acetaldehyde. It participates in carbohydrate degradation; 2-deoxy-D-ribose 1-phosphate degradation; D-glyceraldehyde 3-phosphate and acetaldehyde from 2-deoxy-alpha-D-ribose 1-phosphate: step 2/2. Its function is as follows. Catalyzes a reversible aldol reaction between acetaldehyde and D-glyceraldehyde 3-phosphate to generate 2-deoxy-D-ribose 5-phosphate. In Trichormus variabilis (strain ATCC 29413 / PCC 7937) (Anabaena variabilis), this protein is Deoxyribose-phosphate aldolase.